Reading from the N-terminus, the 201-residue chain is Thymidylate kinase (201 aa).

Gly-7–Ser-14 lines the ATP pocket.

This sequence belongs to the thymidylate kinase family.

The enzyme catalyses dTMP + ATP = dTDP + ADP. Phosphorylation of dTMP to form dTDP in both de novo and salvage pathways of dTTP synthesis. In Thermosipho africanus (strain TCF52B), this protein is Thymidylate kinase.